Consider the following 141-residue polypeptide: Hemoglobin subunit alpha (141 aa).

The Globin domain maps to 1 to 141 (VLSAADKTHV…VSTVLVSKYR (141 aa)). Residue Ser-3 is modified to Phosphoserine. The residue at position 7 (Lys-7) is an N6-succinyllysine. A Phosphothreonine modification is found at Thr-8. Lys-11 carries the post-translational modification N6-succinyllysine. Residue Lys-16 is modified to N6-acetyllysine; alternate. An N6-succinyllysine; alternate modification is found at Lys-16. Ser-35 bears the Phosphoserine mark. The residue at position 40 (Lys-40) is an N6-succinyllysine. The residue at position 49 (Ser-49) is a Phosphoserine. His-58 lines the O2 pocket. Residue His-87 coordinates heme b. Ser-102 is subject to Phosphoserine. Thr-108 carries the phosphothreonine modification. At Ser-124 the chain carries Phosphoserine. Thr-134 carries the phosphothreonine modification. Position 138 is a phosphoserine (Ser-138).

The protein belongs to the globin family. As to quaternary structure, heterotetramer of two alpha chains and two beta chains. Red blood cells.

In terms of biological role, involved in oxygen transport from the lung to the various peripheral tissues. Hemopressin acts as an antagonist peptide of the cannabinoid receptor CNR1. Hemopressin-binding efficiently blocks cannabinoid receptor CNR1 and subsequent signaling. The sequence is that of Hemoglobin subunit alpha (HBA) from Dasypus novemcinctus (Nine-banded armadillo).